We begin with the raw amino-acid sequence, 233 residues long: Lysine exporter LysE (233 aa).

Over 1-2 (ME) the chain is Cytoplasmic. The helical transmembrane segment at 3–23 (IFITGLLLGASLLLSIGPQNV) threads the bilayer. Residues 24 to 65 (LVIKQGIKREGLIAVLLVCLISDVFLFIAGTLGVDLLSNAAP) lie on the Periplasmic side of the membrane. Residues 66–86 (IVLDIMRWGGIAYLLWFAVMA) traverse the membrane as a helical segment. The Cytoplasmic portion of the chain corresponds to 87-143 (AKDAMTNKVEAPQIIEETEPTVPDDTPLGGSAVATDTRNRVRVEVSVDKQRVWVKPM). A helical transmembrane segment spans residues 144–164 (LMAIVLTWLNPNAYLDAFVFI). Topologically, residues 165 to 176 (GGVGAQYGDTGR) are periplasmic. Residues 177–197 (WIFAAGAFAASLIWFPLVGFG) traverse the membrane as a helical segment. Over 198 to 212 (AAALSRPLSSPKVWR) the chain is Cytoplasmic. The helical transmembrane segment at 213-233 (WINVVVAVVMTALAIKLMLMG) threads the bilayer.

It belongs to the LysE/ArgO transporter (TC 2.A.75) family.

It localises to the cell inner membrane. Transport process is modulated by three forces: the membrane potential, the chemical potential of lysine, and the proton gradient. Strongly inhibited by CCCP and valinomycin. Its function is as follows. Catalyzes the efflux of L-lysine. Can also export L-arginine and L-citrulline. The lysEG system prevents bacteriostasis due to elevated L-lysine or L-arginine concentrations that arise during growth in the presence of peptides or in mutants possessing a deregulated biosynthesis pathway. In vitro, can also export D-lysine during biotechnological production of D-amino acids. The sequence is that of Lysine exporter LysE from Corynebacterium glutamicum (strain ATCC 13032 / DSM 20300 / JCM 1318 / BCRC 11384 / CCUG 27702 / LMG 3730 / NBRC 12168 / NCIMB 10025 / NRRL B-2784 / 534).